Reading from the N-terminus, the 378-residue chain is Carbamoyl phosphate synthase small chain (378 aa).

Residues M1–E189 form a CPSase region. Residues S47, G241, and G243 each contribute to the L-glutamine site. Residues H193–R378 form the Glutamine amidotransferase type-1 domain. C269 serves as the catalytic Nucleophile. Positions 270, 273, 311, 313, and 314 each coordinate L-glutamine. Active-site residues include H353 and E355.

It belongs to the CarA family. Composed of two chains; the small (or glutamine) chain promotes the hydrolysis of glutamine to ammonia, which is used by the large (or ammonia) chain to synthesize carbamoyl phosphate. Tetramer of heterodimers (alpha,beta)4.

It carries out the reaction hydrogencarbonate + L-glutamine + 2 ATP + H2O = carbamoyl phosphate + L-glutamate + 2 ADP + phosphate + 2 H(+). The catalysed reaction is L-glutamine + H2O = L-glutamate + NH4(+). It functions in the pathway amino-acid biosynthesis; L-arginine biosynthesis; carbamoyl phosphate from bicarbonate: step 1/1. It participates in pyrimidine metabolism; UMP biosynthesis via de novo pathway; (S)-dihydroorotate from bicarbonate: step 1/3. Small subunit of the glutamine-dependent carbamoyl phosphate synthetase (CPSase). CPSase catalyzes the formation of carbamoyl phosphate from the ammonia moiety of glutamine, carbonate, and phosphate donated by ATP, constituting the first step of 2 biosynthetic pathways, one leading to arginine and/or urea and the other to pyrimidine nucleotides. The small subunit (glutamine amidotransferase) binds and cleaves glutamine to supply the large subunit with the substrate ammonia. The chain is Carbamoyl phosphate synthase small chain from Pseudomonas aeruginosa (strain ATCC 15692 / DSM 22644 / CIP 104116 / JCM 14847 / LMG 12228 / 1C / PRS 101 / PAO1).